The sequence spans 389 residues: tRNA-specific 2-thiouridylase MnmA (389 aa).

ATP-binding positions include glycine 35 to serine 42 and methionine 61. The tract at residues asparagine 121 to aspartate 123 is interaction with target base in tRNA. Cysteine 126 functions as the Nucleophile in the catalytic mechanism. The cysteines at positions 126 and 223 are disulfide-linked. Glycine 151 is an ATP binding site. The segment at lysine 173–glutamine 175 is interaction with tRNA. Cysteine 223 acts as the Cysteine persulfide intermediate in catalysis. An interaction with tRNA region spans residues arginine 335–tyrosine 336.

Belongs to the MnmA/TRMU family.

It localises to the cytoplasm. It catalyses the reaction S-sulfanyl-L-cysteinyl-[protein] + uridine(34) in tRNA + AH2 + ATP = 2-thiouridine(34) in tRNA + L-cysteinyl-[protein] + A + AMP + diphosphate + H(+). Catalyzes the 2-thiolation of uridine at the wobble position (U34) of tRNA, leading to the formation of s(2)U34. The polypeptide is tRNA-specific 2-thiouridylase MnmA (Actinobacillus pleuropneumoniae serotype 3 (strain JL03)).